We begin with the raw amino-acid sequence, 252 residues long: 5-oxoprolinase subunit A (252 aa).

It belongs to the LamB/PxpA family. In terms of assembly, forms a complex composed of PxpA, PxpB and PxpC.

It carries out the reaction 5-oxo-L-proline + ATP + 2 H2O = L-glutamate + ADP + phosphate + H(+). In terms of biological role, catalyzes the cleavage of 5-oxoproline to form L-glutamate coupled to the hydrolysis of ATP to ADP and inorganic phosphate. This chain is 5-oxoprolinase subunit A, found in Mycobacterium marinum (strain ATCC BAA-535 / M).